Reading from the N-terminus, the 372-residue chain is Ligninase LG3 (372 aa).

The first 21 residues, M1–A21, serve as a signal peptide directing secretion. Positions A22–R28 are excised as a propeptide. Cystine bridges form between C31/C43 and C62/C148. H75 (proton acceptor) is an active-site residue. Ca(2+)-binding residues include D76, G94, D96, and S98. H204 provides a ligand contact to heme b. Residues S205, D222, T224, I227, and D229 each coordinate Ca(2+). C277 and C345 are oxidised to a cystine. N285 carries N-linked (GlcNAc...) asparagine glycosylation. Positions F350–T361 are enriched in low complexity. Positions F350–A372 are disordered.

The protein belongs to the peroxidase family. Ligninase subfamily. The cofactor is heme b. Requires Ca(2+) as cofactor.

It catalyses the reaction 1-(3,4-dimethoxyphenyl)-2-(2-methoxyphenoxy)propane-1,3-diol + H2O2 = 3,4-dimethoxybenzaldehyde + guaiacol + glycolaldehyde + H2O. The enzyme catalyses 2 (3,4-dimethoxyphenyl)methanol + H2O2 = 2 (3,4-dimethoxyphenyl)methanol radical + 2 H2O. It participates in secondary metabolite metabolism; lignin degradation. Functionally, depolymerization of lignin. Catalyzes the C(alpha)-C(beta) cleavage of the propyl side chains of lignin. The protein is Ligninase LG3 (GLG3) of Phanerodontia chrysosporium (White-rot fungus).